The primary structure comprises 222 residues: MGQKVHPHGLRVGVIKDWDAKWYADKKNFADNLIEDQQIRKFIKKELFSAGIAKIEIERSAKRVKLNIHTAKPGVIIGKGGSGIERLKASLKNIIAEKNVLINIVEVKNAETNAQLMAENIAAQLEKRISFRRAMKQTIQRAMKAGTLGVKTACSGRLGGAEIARTEQYNEGTIPLQTIRADIDYGFAEADTTYGKIGVKVWVYNGEVLPTKKVEKKEEANA.

The 70-residue stretch at 39–108 folds into the KH type-2 domain; the sequence is IRKFIKKELF…NVLINIVEVK (70 aa).

This sequence belongs to the universal ribosomal protein uS3 family. In terms of assembly, part of the 30S ribosomal subunit. Forms a tight complex with proteins S10 and S14.

Binds the lower part of the 30S subunit head. Binds mRNA in the 70S ribosome, positioning it for translation. This is Small ribosomal subunit protein uS3 from Clostridium perfringens (strain ATCC 13124 / DSM 756 / JCM 1290 / NCIMB 6125 / NCTC 8237 / Type A).